The chain runs to 371 residues: MDFQLQAVDKHARAGILNLVHSQVETPIFMPVGTQGCIKSLDAIDMQERLSAKLILANTYHMYLRPGEKVIEQLGGLHHFAQFHGSFLTDSGGFQAFSLSDNVKLQEDGIVFKSHLDGSKHFFTPTKVLDIQYSLNSDIMMVLDDLVGLPAPLKRLEESIKRSAKWANISLEYHKENNRPNNNLFAIIQGGTHLKMRSLSVGLTHGGFDGYAIGGLAVGESTNEMLETIAHTAPLLPKDKPRYLMGVGTPENILDAISLGVDMFDCVMPTRNARNATLFTHSGKISIKNAPYKLDNTPIEENCTCYTCKRYSKAYLHHLFRAKELTYARLASLHNLHFYLELVKNARNAILEKRFLSFKKEFLERYTMDRQ.

Residue aspartate 90 is the Proton acceptor of the active site. Residues 90 to 94 (DSGGF), aspartate 144, glutamine 189, and glycine 215 contribute to the substrate site. The tract at residues 246–252 (GVGTPEN) is RNA binding. Residue aspartate 265 is the Nucleophile of the active site. Residues 270–274 (TRNAR) are RNA binding; important for wobble base 34 recognition. Zn(2+) contacts are provided by cysteine 303, cysteine 305, cysteine 308, and histidine 334.

It belongs to the queuine tRNA-ribosyltransferase family. In terms of assembly, homodimer. Within each dimer, one monomer is responsible for RNA recognition and catalysis, while the other monomer binds to the replacement base PreQ1. The cofactor is Zn(2+).

It carries out the reaction 7-aminomethyl-7-carbaguanine + guanosine(34) in tRNA = 7-aminomethyl-7-carbaguanosine(34) in tRNA + guanine. It functions in the pathway tRNA modification; tRNA-queuosine biosynthesis. Its function is as follows. Catalyzes the base-exchange of a guanine (G) residue with the queuine precursor 7-aminomethyl-7-deazaguanine (PreQ1) at position 34 (anticodon wobble position) in tRNAs with GU(N) anticodons (tRNA-Asp, -Asn, -His and -Tyr). Catalysis occurs through a double-displacement mechanism. The nucleophile active site attacks the C1' of nucleotide 34 to detach the guanine base from the RNA, forming a covalent enzyme-RNA intermediate. The proton acceptor active site deprotonates the incoming PreQ1, allowing a nucleophilic attack on the C1' of the ribose to form the product. After dissociation, two additional enzymatic reactions on the tRNA convert PreQ1 to queuine (Q), resulting in the hypermodified nucleoside queuosine (7-(((4,5-cis-dihydroxy-2-cyclopenten-1-yl)amino)methyl)-7-deazaguanosine). The chain is Queuine tRNA-ribosyltransferase from Helicobacter acinonychis (strain Sheeba).